A 279-amino-acid polypeptide reads, in one-letter code: MQQYLKILTDVILLGEPRNDRTGTGTVSIFDSYAKFDLREGFPAVTTKRLAWKSVVGELLWFLSGSTNLHDLRVFTFGRDEGQWTIWTPNYEDQAISMGYDKGNLGPVYGKQWRNFGGRDQILELIEGLKNNPHGRRHLVSAWNVAELDKMALPPCHYGFQCYVSNDGYLDLKWTQRSVDCFLGLPFNIASYALLTHILAKLTGLKPRYLIFSGGDTHIYNDHMEQVEEQVKRKPRPLPTLVMPEFVDLYDLLENNTAAWSFHLEGYDPHPALKAKMSS.

DUMP contacts are provided by residues arginine 21 and 136-137 (RR). Residue cysteine 156 is the Nucleophile of the active site. DUMP contacts are provided by residues 177 to 180 (RSVD), asparagine 188, and 218 to 220 (HIY). Aspartate 180 is a (6R)-5,10-methylene-5,6,7,8-tetrahydrofolate binding site.

This sequence belongs to the thymidylate synthase family.

The enzyme catalyses dUMP + (6R)-5,10-methylene-5,6,7,8-tetrahydrofolate = 7,8-dihydrofolate + dTMP. In terms of biological role, sythesizes the thymine necessary for the viral DNA replication. The protein is Probable thymidylate synthase of Escherichia coli (Enterobacteria phage T5).